The following is a 281-amino-acid chain: ATP synthase subunit a (281 aa).

Transmembrane regions (helical) follow at residues 56 to 76 (KPML…WAAF), 117 to 137 (LVVS…IPVA), 144 to 164 (IIAY…TLTF), 181 to 201 (KSLG…NILI), 215 to 235 (FAGH…LNGV), 237 to 257 (IAYA…ELFI), and 259 to 279 (ALQA…AMAE).

It belongs to the ATPase A chain family. As to quaternary structure, F-type ATPases have 2 components, CF(1) - the catalytic core - and CF(0) - the membrane proton channel. CF(1) has five subunits: alpha(3), beta(3), gamma(1), delta(1), epsilon(1). CF(0) has three main subunits: a(1), b(2) and c(9-12). The alpha and beta chains form an alternating ring which encloses part of the gamma chain. CF(1) is attached to CF(0) by a central stalk formed by the gamma and epsilon chains, while a peripheral stalk is formed by the delta and b chains.

The protein localises to the cell membrane. In terms of biological role, key component of the proton channel; it plays a direct role in the translocation of protons across the membrane. The sequence is that of ATP synthase subunit a from Streptomyces lividans.